The chain runs to 833 residues: Homeobox-leucine zipper protein ATHB-8 (833 aa).

Positions 12 to 75 form a DNA-binding region, homeobox; sequence DNGKYVRYTP…NRRCREKQRK (64 aa). Residues 70–108 adopt a coiled-coil conformation; that stretch reads REKQRKEASRLQAVNRKLTAMNKLLMEENDRLQKQVSHL. Residues 150–378 enclose the START domain; it reads RDASPAGLLS…ISQEISQPNV (229 aa).

Belongs to the HD-ZIP homeobox family. Class III subfamily. Interacts with ESR1 and ESR2. Interacts with ZPR3.

Its subcellular location is the nucleus. Probable transcription factor involved in the regulation of vascular development. May promote differentiation of precambial and cambial cells. The sequence is that of Homeobox-leucine zipper protein ATHB-8 (ATHB-8) from Arabidopsis thaliana (Mouse-ear cress).